We begin with the raw amino-acid sequence, 343 residues long: L-threonine 3-dehydrogenase (343 aa).

Residue cysteine 40 participates in Zn(2+) binding. Residues threonine 42 and histidine 45 each act as charge relay system in the active site. Zn(2+)-binding residues include histidine 65, glutamate 66, cysteine 95, cysteine 98, cysteine 101, and cysteine 109. NAD(+)-binding positions include isoleucine 177, aspartate 197, arginine 202, 264–266 (LGI), and 288–289 (IY).

The protein belongs to the zinc-containing alcohol dehydrogenase family. In terms of assembly, homotetramer. Requires Zn(2+) as cofactor.

It localises to the cytoplasm. The catalysed reaction is L-threonine + NAD(+) = (2S)-2-amino-3-oxobutanoate + NADH + H(+). Its pathway is amino-acid degradation; L-threonine degradation via oxydo-reductase pathway; glycine from L-threonine: step 1/2. Catalyzes the NAD(+)-dependent oxidation of L-threonine to 2-amino-3-ketobutyrate. This chain is L-threonine 3-dehydrogenase, found in Vibrio vulnificus (strain CMCP6).